A 233-amino-acid chain; its full sequence is Large ribosomal subunit protein uL1 (233 aa).

This sequence belongs to the universal ribosomal protein uL1 family. In terms of assembly, part of the 50S ribosomal subunit.

In terms of biological role, binds directly to 23S rRNA. The L1 stalk is quite mobile in the ribosome, and is involved in E site tRNA release. Protein L1 is also a translational repressor protein, it controls the translation of the L11 operon by binding to its mRNA. This chain is Large ribosomal subunit protein uL1, found in Psychrobacter arcticus (strain DSM 17307 / VKM B-2377 / 273-4).